A 410-amino-acid chain; its full sequence is Chitin deacetylase 3 (410 aa).

A signal peptide spans 1–18; the sequence is MYGHLSLSTLSLLAVVAA. A propeptide spanning residues 19 to 39 is cleaved from the precursor; that stretch reads APFPESWLQPRDSDVSQLFRR. N-linked (GlcNAc...) asparagine glycosylation is found at Asn61 and Asn80. One can recognise a NodB homology domain in the interval 124–314; that stretch reads KVWALSFDDG…KAVANGWSVK (191 aa). Residue Asp131 is the Proton acceptor of the active site. Asp131 provides a ligand contact to acetate. Asp132 contacts Co(2+). N-linked (GlcNAc...) asparagine glycosylation is present at Asn149. Residues His183 and His187 each contribute to the Co(2+) site. Tyr225 is a binding site for acetate. Asn279 carries N-linked (GlcNAc...) asparagine glycosylation. His289 serves as the catalytic Proton donor. Asn293 is a glycosylation site (N-linked (GlcNAc...) asparagine). A lipid anchor (GPI-anchor amidated serine) is attached at Ser385. A propeptide spans 386–410 (removed in mature form); that stretch reads SSWPIANRPSLFVIACGLALAAIMV.

This sequence belongs to the polysaccharide deacetylase family. Co(2+) is required as a cofactor.

Its subcellular location is the cell membrane. The enzyme catalyses [(1-&gt;4)-N-acetyl-beta-D-glucosaminyl](n) + n H2O = chitosan + n acetate. Its function is as follows. Hydrolyzes the N-acetamido groups of N-acetyl-D-glucosamine residues in chitin to form chitosan and acetate. Chitosan is required to anchor melanin to the cell wall, for maintenance of cell wall integrity, and for proper cytokinesis. Chitosan offers an advantage during infection as it is less readily detected than chitin by host immunosurveillance mechanisms. This chain is Chitin deacetylase 3, found in Cryptococcus neoformans var. neoformans serotype D (strain JEC21 / ATCC MYA-565) (Filobasidiella neoformans).